Here is an 867-residue protein sequence, read N- to C-terminus: Alanine--tRNA ligase (867 aa).

Positions 554, 558, 656, and 660 each coordinate Zn(2+).

This sequence belongs to the class-II aminoacyl-tRNA synthetase family. Zn(2+) serves as cofactor.

The protein localises to the cytoplasm. It catalyses the reaction tRNA(Ala) + L-alanine + ATP = L-alanyl-tRNA(Ala) + AMP + diphosphate. In terms of biological role, catalyzes the attachment of alanine to tRNA(Ala) in a two-step reaction: alanine is first activated by ATP to form Ala-AMP and then transferred to the acceptor end of tRNA(Ala). Also edits incorrectly charged Ser-tRNA(Ala) and Gly-tRNA(Ala) via its editing domain. This Methylococcus capsulatus (strain ATCC 33009 / NCIMB 11132 / Bath) protein is Alanine--tRNA ligase.